Consider the following 224-residue polypeptide: MGYSKTLAVSLFAVLLLAPAVLASDPDPLQDFCVADLDGKAVSVNGHPCKPMSEAGDDFLFSSKLAKAGNTSTPNGSAVTELDVAEWPGTNTLGVSMNRVDFAPGGTNPPHVHPRATEIGIVMKGELLVGILGSLDSGNKLYSRVVRAGETFLIPRGLMHFQFNVGKTEASMVVSFNSQNPGIVFVPLTLFGSNPPIPTPVLTKALRVEAGVVELLKSKFAAGF.

Residues 1 to 23 (MGYSKTLAVSLFAVLLLAPAVLA) form the signal peptide. An intrachain disulfide couples cysteine 33 to cysteine 49. The Cupin type-1 domain occupies 63–214 (SKLAKAGNTS…ALRVEAGVVE (152 aa)). Residues asparagine 70 and asparagine 75 are each glycosylated (N-linked (GlcNAc...) asparagine). Mn(2+) is bound by residues histidine 111, histidine 113, glutamate 118, and histidine 160.

Belongs to the germin family. As to quaternary structure, oligomer (believed to be a pentamer but probably hexamer). Glycosylated. A form called G contains antennary GlcNAc residues, whereas a form called G' lacks antennary GlcNAc residues in its otherwise identical glycans. As to expression, root.

It is found in the secreted. Its subcellular location is the extracellular space. The protein resides in the apoplast. It localises to the cell wall. The enzyme catalyses oxalate + O2 + 2 H(+) = H2O2 + 2 CO2. In terms of biological role, releases hydrogen peroxide in the apoplast. May play an important role in several aspects of plant growth and defense mechanisms. In Hordeum vulgare (Barley), this protein is Oxalate oxidase 2.